Consider the following 464-residue polypeptide: Glutamate--tRNA ligase (464 aa).

Residues 9 to 19 (PSPTGYLHIGG) carry the 'HIGH' region motif. Residues 242 to 246 (KISKR) carry the 'KMSKS' region motif. Lys-245 contributes to the ATP binding site.

The protein belongs to the class-I aminoacyl-tRNA synthetase family. Glutamate--tRNA ligase type 1 subfamily. In terms of assembly, monomer.

The protein resides in the cytoplasm. It catalyses the reaction tRNA(Glu) + L-glutamate + ATP = L-glutamyl-tRNA(Glu) + AMP + diphosphate. Its function is as follows. Catalyzes the attachment of glutamate to tRNA(Glu) in a two-step reaction: glutamate is first activated by ATP to form Glu-AMP and then transferred to the acceptor end of tRNA(Glu). The protein is Glutamate--tRNA ligase of Neisseria meningitidis serogroup A / serotype 4A (strain DSM 15465 / Z2491).